The chain runs to 297 residues: Bifunctional protein FolD (297 aa).

Residues 168–170, T197, and V238 contribute to the NADP(+) site; that span reads GRS.

The protein belongs to the tetrahydrofolate dehydrogenase/cyclohydrolase family. As to quaternary structure, homodimer.

The catalysed reaction is (6R)-5,10-methylene-5,6,7,8-tetrahydrofolate + NADP(+) = (6R)-5,10-methenyltetrahydrofolate + NADPH. It carries out the reaction (6R)-5,10-methenyltetrahydrofolate + H2O = (6R)-10-formyltetrahydrofolate + H(+). The protein operates within one-carbon metabolism; tetrahydrofolate interconversion. Functionally, catalyzes the oxidation of 5,10-methylenetetrahydrofolate to 5,10-methenyltetrahydrofolate and then the hydrolysis of 5,10-methenyltetrahydrofolate to 10-formyltetrahydrofolate. The polypeptide is Bifunctional protein FolD (Lawsonia intracellularis (strain PHE/MN1-00)).